We begin with the raw amino-acid sequence, 104 residues long: NADH-quinone oxidoreductase subunit K (104 aa).

3 consecutive transmembrane segments (helical) span residues 4–24 (VAYYLVLSAILFSIGVGAFLI), 28–48 (IITIFMSIELMLNAVNLSFVA), and 64–84 (IFVFFVMVVAAAEAAVGLAII).

The protein belongs to the complex I subunit 4L family. NDH-1 is composed of 14 different subunits. Subunits NuoA, H, J, K, L, M, N constitute the membrane sector of the complex.

It localises to the cell inner membrane. It catalyses the reaction a quinone + NADH + 5 H(+)(in) = a quinol + NAD(+) + 4 H(+)(out). NDH-1 shuttles electrons from NADH, via FMN and iron-sulfur (Fe-S) centers, to quinones in the respiratory chain. The immediate electron acceptor for the enzyme in this species is believed to be ubiquinone. Couples the redox reaction to proton translocation (for every two electrons transferred, four hydrogen ions are translocated across the cytoplasmic membrane), and thus conserves the redox energy in a proton gradient. This is NADH-quinone oxidoreductase subunit K from Acidobacterium capsulatum (strain ATCC 51196 / DSM 11244 / BCRC 80197 / JCM 7670 / NBRC 15755 / NCIMB 13165 / 161).